The sequence spans 190 residues: MAKATTIKEALSRWEEKTGQKPSDAREIKLYAQIPPIEKMDASLSTLANCEKLSLSTNCIEKIANLNGLKNLRILSLGRNNIKNLNGLEAVGDTLEELWISYNFIEKLKGIHVMRKLKILYISNNLVKDWAEFVKLAELPCLEDLVFVGNPLEEKHSAEGNWIEEATKRVPKLKKLDGTPVIKEDEEEES.

At A2 the chain carries N-acetylalanine. 4 LRR repeats span residues 47–69 (LANC…LNGL), 70–93 (KNLR…AVGD), 95–114 (LEEL…IHVM), and 115–138 (RKLK…KLAE). S56 is subject to Phosphoserine.

This sequence belongs to the dynein light chain LC1-type family. As to quaternary structure, interacts with ZMYND10 (via C-terminus). Interacts with DNAH5, a outer arm dynein heavy chain. Interacts with tubulin located within the A-tubule of the outer doublets in a ATP-independent manner.

It localises to the cytoplasm. Its subcellular location is the cytoskeleton. The protein localises to the cilium axoneme. Part of the multisubunit axonemal ATPase complexes that generate the force for cilia motility and govern beat frequency. Component of the outer arm dynein (ODA). May be involved in a mechanosensory feedback mechanism controlling ODA activity based on external conformational cues by tethering the outer arm dynein heavy chain (DNAH5) to the microtubule within the axoneme. Important for ciliary function in the airways and for the function of the cilia that produce the nodal flow essential for the determination of the left-right asymmetry. The polypeptide is Dynein axonemal light chain 1 (Rattus norvegicus (Rat)).